The sequence spans 290 residues: 33 kDa chaperonin (290 aa).

2 disulfide bridges follow: Cys-235–Cys-237 and Cys-268–Cys-271.

This sequence belongs to the HSP33 family. Under oxidizing conditions two disulfide bonds are formed involving the reactive cysteines. Under reducing conditions zinc is bound to the reactive cysteines and the protein is inactive.

The protein localises to the cytoplasm. In terms of biological role, redox regulated molecular chaperone. Protects both thermally unfolding and oxidatively damaged proteins from irreversible aggregation. Plays an important role in the bacterial defense system toward oxidative stress. This Streptococcus pyogenes serotype M12 (strain MGAS2096) protein is 33 kDa chaperonin.